Here is a 421-residue protein sequence, read N- to C-terminus: UDP-N-acetylglucosamine 1-carboxyvinyltransferase (421 aa).

23–24 (KN) lines the phosphoenolpyruvate pocket. Arginine 92 provides a ligand contact to UDP-N-acetyl-alpha-D-glucosamine. The Proton donor role is filled by cysteine 116. The residue at position 116 (cysteine 116) is a 2-(S-cysteinyl)pyruvic acid O-phosphothioketal. UDP-N-acetyl-alpha-D-glucosamine contacts are provided by residues 121–125 (RPVDL), 161–164 (KVSV), aspartate 306, and isoleucine 328.

The protein belongs to the EPSP synthase family. MurA subfamily.

The protein resides in the cytoplasm. The enzyme catalyses phosphoenolpyruvate + UDP-N-acetyl-alpha-D-glucosamine = UDP-N-acetyl-3-O-(1-carboxyvinyl)-alpha-D-glucosamine + phosphate. The protein operates within cell wall biogenesis; peptidoglycan biosynthesis. Cell wall formation. Adds enolpyruvyl to UDP-N-acetylglucosamine. The sequence is that of UDP-N-acetylglucosamine 1-carboxyvinyltransferase from Vibrio campbellii (strain ATCC BAA-1116).